Consider the following 504-residue polypeptide: L-carnitine/gamma-butyrobetaine antiporter (504 aa).

Transmembrane regions (helical) follow at residues 10-30 (IEPK…WLTV), 51-71 (WGWA…WLVF), 92-112 (IFMM…SIEI), 143-163 (GPLP…FFFV), 195-215 (FYLV…TPLV), 231-251 (LDAI…ACGL), 263-283 (SYLS…SFIM), 316-336 (WTVF…IFLA), 347-367 (LCFG…TVLG), 403-423 (LSTA…VTLI), 446-466 (LLVR…LLAL), and 475-495 (AIIA…LSFI).

This sequence belongs to the BCCT transporter (TC 2.A.15) family. CaiT subfamily. As to quaternary structure, homotrimer.

The protein localises to the cell inner membrane. The enzyme catalyses 4-(trimethylamino)butanoate(in) + (R)-carnitine(out) = 4-(trimethylamino)butanoate(out) + (R)-carnitine(in). It participates in amine and polyamine metabolism; carnitine metabolism. In terms of biological role, catalyzes the exchange of L-carnitine for gamma-butyrobetaine. The sequence is that of L-carnitine/gamma-butyrobetaine antiporter from Escherichia fergusonii (strain ATCC 35469 / DSM 13698 / CCUG 18766 / IAM 14443 / JCM 21226 / LMG 7866 / NBRC 102419 / NCTC 12128 / CDC 0568-73).